A 760-amino-acid polypeptide reads, in one-letter code: Dipeptidyl peptidase 4 (760 aa).

Residues methionine 1–lysine 6 are Cytoplasmic-facing. A helical; Signal-anchor for type II membrane protein transmembrane segment spans residues valine 7–leucine 28. Residues serine 29–histidine 760 lie on the Extracellular side of the membrane. Asparagine 83, asparagine 90, asparagine 144, asparagine 213, asparagine 223, asparagine 315, and asparagine 328 each carry an N-linked (GlcNAc...) asparagine glycan. 4 disulfide bridges follow: cysteine 322–cysteine 333, cysteine 379–cysteine 388, cysteine 438–cysteine 441, and cysteine 448–cysteine 466. A glycan (N-linked (GlcNAc...) asparagine) is linked at asparagine 514. Serine 624 (charge relay system) is an active-site residue. A disulfide bridge connects residues cysteine 643 and cysteine 756. Residue asparagine 679 is glycosylated (N-linked (GlcNAc...) asparagine). Residues aspartate 702 and histidine 734 each act as charge relay system in the active site.

It belongs to the peptidase S9B family. DPPIV subfamily. In terms of assembly, monomer. Homodimer. Heterodimer with Seprase (FAP). Requires homodimerization for optimal dipeptidyl peptidase activity and T-cell costimulation. Found in a membrane raft complex, at least composed of BCL10, CARD11, DPP4 and IKBKB. Associates with collagen. Interacts with PTPRC; the interaction is enhanced in an interleukin-12-dependent manner in activated lymphocytes. Interacts (via extracellular domain) with ADA; does not inhibit its dipeptidyl peptidase activity. Interacts with CAV1 (via the N-terminus); the interaction is direct. Interacts (via cytoplasmic tail) with CARD11 (via PDZ domain); its homodimerization is necessary for interaction with CARD11. Interacts with IGF2R; the interaction is direct. Interacts with GPC3. The soluble form (Dipeptidyl peptidase 4 soluble form also named SDPP) derives from the membrane form (Dipeptidyl peptidase 4 membrane form also named MDPP) by proteolytic processing. Post-translationally, N- and O-Glycosylated. In terms of processing, phosphorylated. Mannose 6-phosphate residues in the carbohydrate moiety are necessary for interaction with IGF2R in activated T-cells. Mannose 6-phosphorylation is induced during T-cell activation.

Its subcellular location is the secreted. It is found in the cell membrane. The protein localises to the apical cell membrane. The protein resides in the cell projection. It localises to the invadopodium membrane. Its subcellular location is the lamellipodium membrane. It is found in the cell junction. The protein localises to the membrane raft. It catalyses the reaction Release of an N-terminal dipeptide, Xaa-Yaa-|-Zaa-, from a polypeptide, preferentially when Yaa is Pro, provided Zaa is neither Pro nor hydroxyproline.. Inhibited by GPC3 and diprotin A. Its function is as follows. Cell surface glycoprotein receptor involved in the costimulatory signal essential for T-cell receptor (TCR)-mediated T-cell activation. Acts as a positive regulator of T-cell coactivation, by binding at least ADA, CAV1, IGF2R, and PTPRC. Its binding to CAV1 and CARD11 induces T-cell proliferation and NF-kappa-B activation in a T-cell receptor/CD3-dependent manner. Its interaction with ADA also regulates lymphocyte-epithelial cell adhesion. In association with FAP is involved in the pericellular proteolysis of the extracellular matrix (ECM), the migration and invasion of endothelial cells into the ECM. May be involved in the promotion of lymphatic endothelial cells adhesion, migration and tube formation. When overexpressed, enhanced cell proliferation, a process inhibited by GPC3. Also acts as a serine exopeptidase with a dipeptidyl peptidase activity that regulates various physiological processes by cleaving peptides in the circulation, including many chemokines, mitogenic growth factors, neuropeptides and peptide hormones. Removes N-terminal dipeptides sequentially from polypeptides having unsubstituted N-termini provided that the penultimate residue is proline. The sequence is that of Dipeptidyl peptidase 4 (Dpp4) from Mus musculus (Mouse).